The sequence spans 603 residues: Polypeptide N-acetylgalactosaminyltransferase 10 (603 aa).

Over 1–11 the chain is Cytoplasmic; sequence MRRKEKRLLQA. The helical; Signal-anchor for type II membrane protein transmembrane segment at 12–31 threads the bilayer; sequence VALALAALVLLPNVGLWALY. At 32-603 the chain is on the lumenal side; sequence RERQPDGSPG…STVLENFNKN (572 aa). N-linked (GlcNAc...) asparagine glycosylation is found at Asn-124 and Asn-146. 5 disulfides stabilise this stretch: Cys-135–Cys-365, Cys-356–Cys-432, Cys-471–Cys-488, Cys-523–Cys-538, and Cys-563–Cys-578. Residues 144–253 form a catalytic subdomain A region; that stretch reads LPNTSIIIPF…VNWLPPLLDR (110 aa). Asp-185 and Arg-214 together coordinate substrate. Asp-237 provides a ligand contact to Mn(2+). Residue Ser-238 coordinates substrate. His-239 contributes to the Mn(2+) binding site. The interval 311–373 is catalytic subdomain B; the sequence is PFESPVMAGG…PCSRVGHIYR (63 aa). Trp-342 is a binding site for substrate. His-370 lines the Mn(2+) pocket. Substrate is bound by residues Arg-373 and Tyr-378. The tract at residues 373 to 384 is flexible loop; the sequence is RKYVPYKVPAGV. One can recognise a Ricin B-type lectin domain in the interval 458 to 590; that stretch reads AAWGEIRNVG…SSLTQQWLFE (133 aa). N-linked (GlcNAc...) asparagine glycosylation occurs at Asn-593.

This sequence belongs to the glycosyltransferase 2 family. GalNAc-T subfamily. Requires Mn(2+) as cofactor. As to expression, expressed at higher level than GALNT9. In the developing hindbrain region of 14.5 dpc embryos it accumulates in the rapidly dividing, undifferentiated ventricular zone adjacent to the pons. It also accumulates in the regions immediately rostral and caudal to the dorsal rhombic lips differentiating into the cerebellum. Not expressed in the developing choroid plexus.

The protein resides in the golgi apparatus membrane. It carries out the reaction L-seryl-[protein] + UDP-N-acetyl-alpha-D-galactosamine = a 3-O-[N-acetyl-alpha-D-galactosaminyl]-L-seryl-[protein] + UDP + H(+). The enzyme catalyses L-threonyl-[protein] + UDP-N-acetyl-alpha-D-galactosamine = a 3-O-[N-acetyl-alpha-D-galactosaminyl]-L-threonyl-[protein] + UDP + H(+). It functions in the pathway protein modification; protein glycosylation. Catalyzes the initial reaction in O-linked oligosaccharide biosynthesis, the transfer of an N-acetyl-D-galactosamine residue to a serine or threonine residue on the protein receptor. Has activity toward Muc5Ac and EA2 peptide substrates. This Mus musculus (Mouse) protein is Polypeptide N-acetylgalactosaminyltransferase 10 (Galnt10).